Reading from the N-terminus, the 286-residue chain is Bifunctional protein FolD (286 aa).

NADP(+)-binding positions include 164-166, Ile-189, and Ile-230; that span reads GAS.

It belongs to the tetrahydrofolate dehydrogenase/cyclohydrolase family. Homodimer.

The enzyme catalyses (6R)-5,10-methylene-5,6,7,8-tetrahydrofolate + NADP(+) = (6R)-5,10-methenyltetrahydrofolate + NADPH. It carries out the reaction (6R)-5,10-methenyltetrahydrofolate + H2O = (6R)-10-formyltetrahydrofolate + H(+). The protein operates within one-carbon metabolism; tetrahydrofolate interconversion. Functionally, catalyzes the oxidation of 5,10-methylenetetrahydrofolate to 5,10-methenyltetrahydrofolate and then the hydrolysis of 5,10-methenyltetrahydrofolate to 10-formyltetrahydrofolate. The chain is Bifunctional protein FolD from Wolinella succinogenes (strain ATCC 29543 / DSM 1740 / CCUG 13145 / JCM 31913 / LMG 7466 / NCTC 11488 / FDC 602W) (Vibrio succinogenes).